We begin with the raw amino-acid sequence, 74 residues long: MIRRALVFLVRVYQRLVSPLLPPACRFYPSCSAYAATALERHGALKGSALAARRLLRCHPFHPGGIDPVPESER.

This sequence belongs to the UPF0161 family.

The protein resides in the cell inner membrane. In terms of biological role, could be involved in insertion of integral membrane proteins into the membrane. In Anaeromyxobacter sp. (strain Fw109-5), this protein is Putative membrane protein insertion efficiency factor.